The chain runs to 453 residues: Serine--tRNA ligase (453 aa).

252–254 (TAE) serves as a coordination point for L-serine. ATP contacts are provided by residues 283–285 (RKE) and Val-299. Residue Glu-306 participates in L-serine binding. 370–373 (EMVS) lines the ATP pocket. Thr-405 lines the L-serine pocket.

It belongs to the class-II aminoacyl-tRNA synthetase family. Type-1 seryl-tRNA synthetase subfamily. In terms of assembly, homodimer. The tRNA molecule binds across the dimer.

The protein localises to the cytoplasm. It carries out the reaction tRNA(Ser) + L-serine + ATP = L-seryl-tRNA(Ser) + AMP + diphosphate + H(+). The enzyme catalyses tRNA(Sec) + L-serine + ATP = L-seryl-tRNA(Sec) + AMP + diphosphate + H(+). The protein operates within aminoacyl-tRNA biosynthesis; selenocysteinyl-tRNA(Sec) biosynthesis; L-seryl-tRNA(Sec) from L-serine and tRNA(Sec): step 1/1. Its function is as follows. Catalyzes the attachment of serine to tRNA(Ser). Is also able to aminoacylate tRNA(Sec) with serine, to form the misacylated tRNA L-seryl-tRNA(Sec), which will be further converted into selenocysteinyl-tRNA(Sec). This is Serine--tRNA ligase from Sulfurisphaera tokodaii (strain DSM 16993 / JCM 10545 / NBRC 100140 / 7) (Sulfolobus tokodaii).